Reading from the N-terminus, the 440-residue chain is Xylose isomerase (440 aa).

Catalysis depends on residues H101 and D104. Residues E232, E268, H271, D296, D307, D309, and D339 each coordinate Mg(2+).

Belongs to the xylose isomerase family. Homotetramer. Mg(2+) serves as cofactor.

It is found in the cytoplasm. The catalysed reaction is alpha-D-xylose = alpha-D-xylulofuranose. This Cronobacter sakazakii (strain ATCC BAA-894) (Enterobacter sakazakii) protein is Xylose isomerase.